A 251-amino-acid polypeptide reads, in one-letter code: Cell division protein ZapD (251 aa).

Belongs to the ZapD family. Interacts with FtsZ.

The protein resides in the cytoplasm. In terms of biological role, cell division factor that enhances FtsZ-ring assembly. Directly interacts with FtsZ and promotes bundling of FtsZ protofilaments, with a reduction in FtsZ GTPase activity. The polypeptide is Cell division protein ZapD (Nitrosomonas eutropha (strain DSM 101675 / C91 / Nm57)).